The chain runs to 1662 residues: ABC transporter A family member 5 (1662 aa).

The next 7 helical transmembrane spans lie at 30-50 (IVFP…VQLF), 242-262 (SVFV…ELVV), 284-304 (ISWI…IIVI), 317-337 (IIVI…AFIF), 346-366 (FAGL…IFIG), 377-397 (LLLC…IMSI), and 417-437 (QIIG…WYLD). In terms of domain architecture, ABC transporter 1 spans 505–739 (ISIRNLRKEF…YGVGYLLTCS (235 aa)). Residue 541 to 548 (GPNGSGKS) coordinates ATP. 7 helical membrane passes run 872 to 892 (FKAF…SIIV), 1052 to 1072 (IVYF…SFAG), 1102 to 1122 (LWDY…LAIV), 1130 to 1150 (FGLF…LSYL), 1163 to 1183 (GAIT…MIIL), 1201 to 1221 (IIDI…VIFI), and 1246 to 1266 (STPI…ILLI). In terms of domain architecture, ABC transporter 2 spans 1322–1557 (LQYKGLHKLF…FGAGYSVEVK (236 aa)). Position 1360–1367 (1360–1367 (GLNGAGKT)) interacts with ATP.

It belongs to the ABC transporter superfamily. ABCA family.

The protein localises to the membrane. In Dictyostelium discoideum (Social amoeba), this protein is ABC transporter A family member 5 (abcA5).